A 208-amino-acid polypeptide reads, in one-letter code: MVSRRVQALLEQLRAQGIRDEQVLDALAAVPREKFIDEAFEHKAWENIALPIGQGQTISQPYMVARMTELLELTPQSRVLEIGTGSGYQTAILAHLVHHVCSVERIKGLQWQARRRLKQLDLHNVSTRHGDGWQGWQARAPFDAIIVTAAPPEIPTALMAQLDEGGILVLPVGDEQQFLKRVRRRGGEFIIDTVEAVRFVPLVRGELA.

S59 is a catalytic residue.

The protein belongs to the methyltransferase superfamily. L-isoaspartyl/D-aspartyl protein methyltransferase family.

The protein localises to the cytoplasm. The catalysed reaction is [protein]-L-isoaspartate + S-adenosyl-L-methionine = [protein]-L-isoaspartate alpha-methyl ester + S-adenosyl-L-homocysteine. Its function is as follows. Catalyzes the methyl esterification of L-isoaspartyl residues in peptides and proteins that result from spontaneous decomposition of normal L-aspartyl and L-asparaginyl residues. It plays a role in the repair and/or degradation of damaged proteins. This Salmonella arizonae (strain ATCC BAA-731 / CDC346-86 / RSK2980) protein is Protein-L-isoaspartate O-methyltransferase.